The sequence spans 230 residues: Small ribosomal subunit protein uS3 (230 aa).

Residues 39-107 (VRKYLADKLQ…PAQINIAEIR (69 aa)) form the KH type-2 domain.

The protein belongs to the universal ribosomal protein uS3 family. Part of the 30S ribosomal subunit. Forms a tight complex with proteins S10 and S14.

In terms of biological role, binds the lower part of the 30S subunit head. Binds mRNA in the 70S ribosome, positioning it for translation. The sequence is that of Small ribosomal subunit protein uS3 from Shewanella oneidensis (strain ATCC 700550 / JCM 31522 / CIP 106686 / LMG 19005 / NCIMB 14063 / MR-1).